We begin with the raw amino-acid sequence, 214 residues long: Thymidylate kinase (214 aa).

ATP is bound at residue 11–18 (GPEGAGKT).

It belongs to the thymidylate kinase family.

It catalyses the reaction dTMP + ATP = dTDP + ADP. Phosphorylation of dTMP to form dTDP in both de novo and salvage pathways of dTTP synthesis. The chain is Thymidylate kinase from Leuconostoc citreum (strain KM20).